Reading from the N-terminus, the 918-residue chain is DNA ligase 1 (918 aa).

Polar residues predominate over residues 1–15 (MQRSIMSFFQPTTTE). The disordered stretch occupies residues 1-271 (MQRSIMSFFQ…DPTNYNPSKS (271 aa)). Residues 16–54 (GKAKKPEKEIPSSIREKEPPPKVALKERNRAVPESDSPV) show a composition bias toward basic and acidic residues. Ser-50, Ser-52, Ser-66, and Ser-67 each carry phosphoserine. A Phosphothreonine modification is found at Thr-78. The segment covering 81–92 (VQKPVSDSKQSS) has biased composition (low complexity). The segment covering 100–114 (PENSPVFNCSPSMDI) has biased composition (polar residues). The span at 120 to 130 (PKRRTARKQLP) shows a compositional bias: basic residues. Lys-145 carries the N6-acetyllysine modification. Thr-195 carries the phosphothreonine modification. Lys-227 carries the post-translational modification N6-acetyllysine. Phosphoserine is present on residues Ser-230 and Ser-231. Thr-234 carries the phosphothreonine modification. Over residues 240-259 (VKTEVKQEESDTPRKEETKG) the composition is skewed to basic and acidic residues. Glu-566 serves as a coordination point for ATP. Lys-568 serves as the catalytic N6-AMP-lysine intermediate. Positions 573 and 621 each coordinate ATP. Residue Glu-621 coordinates Mg(2+). The segment at 642–644 (KRK) is interaction with target DNA. Glu-720 provides a ligand contact to Mg(2+). The ATP site is built by Lys-725 and Lys-744. Thr-798 carries the post-translational modification Phosphothreonine. A phosphoserine mark is found at Ser-801, Ser-908, Ser-909, and Ser-913. Positions 881–918 (DKQPEQATTSDQVASLYRKQSQIQNQQSSDLDSDVEDY) are disordered. Residues 885-910 (EQATTSDQVASLYRKQSQIQNQQSSD) show a composition bias toward polar residues.

Belongs to the ATP-dependent DNA ligase family. As to quaternary structure, interacts with PCNA. Interacts with POLB. Requires Mg(2+) as cofactor.

It is found in the nucleus. The enzyme catalyses ATP + (deoxyribonucleotide)n-3'-hydroxyl + 5'-phospho-(deoxyribonucleotide)m = (deoxyribonucleotide)n+m + AMP + diphosphate.. DNA ligase that seals nicks in double-stranded during DNA repair. Also involved in DNA replication and DNA recombination. The chain is DNA ligase 1 (Lig1) from Rattus norvegicus (Rat).